Here is a 391-residue protein sequence, read N- to C-terminus: Ferrochelatase (391 aa).

Fe cation-binding residues include His196 and Glu281.

Belongs to the ferrochelatase family.

It localises to the cytoplasm. The enzyme catalyses heme b + 2 H(+) = protoporphyrin IX + Fe(2+). It functions in the pathway porphyrin-containing compound metabolism; protoheme biosynthesis; protoheme from protoporphyrin-IX: step 1/1. Catalyzes the ferrous insertion into protoporphyrin IX. In Prochlorococcus marinus (strain MIT 9515), this protein is Ferrochelatase.